The following is a 267-amino-acid chain: Imidazole glycerol phosphate synthase subunit HisF (267 aa).

Catalysis depends on residues aspartate 22 and aspartate 141.

Belongs to the HisA/HisF family. As to quaternary structure, heterodimer of HisH and HisF.

Its subcellular location is the cytoplasm. The enzyme catalyses 5-[(5-phospho-1-deoxy-D-ribulos-1-ylimino)methylamino]-1-(5-phospho-beta-D-ribosyl)imidazole-4-carboxamide + L-glutamine = D-erythro-1-(imidazol-4-yl)glycerol 3-phosphate + 5-amino-1-(5-phospho-beta-D-ribosyl)imidazole-4-carboxamide + L-glutamate + H(+). It participates in amino-acid biosynthesis; L-histidine biosynthesis; L-histidine from 5-phospho-alpha-D-ribose 1-diphosphate: step 5/9. Functionally, IGPS catalyzes the conversion of PRFAR and glutamine to IGP, AICAR and glutamate. The HisF subunit catalyzes the cyclization activity that produces IGP and AICAR from PRFAR using the ammonia provided by the HisH subunit. The sequence is that of Imidazole glycerol phosphate synthase subunit HisF from Mycobacterium bovis (strain ATCC BAA-935 / AF2122/97).